The sequence spans 146 residues: Hemoglobin subunit beta (146 aa).

At Val-1 the chain carries N-acetylvaline. A Globin domain is found at His-2–His-146. Position 44 is a phosphoserine (Ser-44). An N6-acetyllysine modification is found at Lys-59. His-63 provides a ligand contact to heme b. Position 82 is an N6-acetyllysine (Lys-82). A heme b-binding site is contributed by His-92. Cys-93 is modified (S-nitrosocysteine). The residue at position 144 (Lys-144) is an N6-acetyllysine.

It belongs to the globin family. As to quaternary structure, heterotetramer of two alpha chains and two beta chains. As to expression, red blood cells.

Its function is as follows. Involved in oxygen transport from the lung to the various peripheral tissues. The protein is Hemoglobin subunit beta of Tamias striatus (Eastern chipmunk).